Consider the following 641-residue polypeptide: Uromodulin (641 aa).

A signal peptide spans 1-24; it reads MGQPPLTWMLMVVVASWFITTAAT. Asparagine 25 carries an N-linked (GlcNAc...) asparagine glycan. One can recognise an EGF-like 1 domain in the interval 28-64; the sequence is EARWCSECHSNATCTEDEAVTTCTCQEGFTGDGLTCV. Disulfide bonds link cysteine 32–cysteine 41, cysteine 35–cysteine 50, cysteine 52–cysteine 63, cysteine 69–cysteine 83, cysteine 77–cysteine 92, cysteine 94–cysteine 106, cysteine 112–cysteine 126, cysteine 120–cysteine 135, cysteine 137–cysteine 148, cysteine 150–cysteine 161, cysteine 155–cysteine 170, cysteine 174–cysteine 267, cysteine 195–cysteine 282, cysteine 217–cysteine 255, cysteine 223–cysteine 287, cysteine 248–cysteine 256, cysteine 297–cysteine 306, cysteine 300–cysteine 315, cysteine 317–cysteine 347, cysteine 335–cysteine 425, and cysteine 366–cysteine 389. An EGF-like 2; calcium-binding domain is found at 65–107; the sequence is DLDECAIPGAHNCSANSSCVNTPGSFSCVCPEGFRLSPGLGCT. An N-linked (GlcNAc...) asparagine glycan is attached at asparagine 76. Residues 108 to 149 enclose the EGF-like 3; calcium-binding domain; the sequence is DVDECAEPGLSHCHALATCVNVVGNYLCVCPAGYRGDGWHCE. A beta hairpin region spans residues 150-171; it reads CSPGSCGPGLDCVPEGDALVCA. A D10C region spans residues 172 to 291; sequence DPCQAHRTLD…CHLAYCTDPS (120 aa). A glycan (N-linked (GlcNAc...) asparagine) is linked at asparagine 232. Residue asparagine 275 is glycosylated (N-linked (GlcNAc...) asparagine). Residues 292 to 323 form the EGF-like 4 domain; it reads SVEGTCEECSIDEDCKSDNGRWHCQCKQDFNI. Asparagine 322 is a glycosylation site (N-linked (GlcNAc...) asparagine). A ZP-N region spans residues 334-429; sequence ECGANDMKVS…KINFACSYPL (96 aa). A ZP domain is found at 334-589; it reads ECGANDMKVS…PTCSGTRFRS (256 aa). The flexible ZP-N/ZP-C linker; important for secretion and polymerization into filaments stretch occupies residues 430–453; the sequence is DMKVSLKTSLQPVVSALNITVGGT. Asparagine 447 carries N-linked (GlcNAc...) asparagine glycosylation. The internal hydrophobic patch (IHP) stretch occupies residues 454-464; the sequence is GMFTVRMALFQ. The interval 454–589 is ZP-C; that stretch reads GMFTVRMALF…PTCSGTRFRS (136 aa). 3 disulfides stabilise this stretch: cysteine 506/cysteine 566, cysteine 527/cysteine 582, and cysteine 571/cysteine 578. The essential for cleavage by HPN stretch occupies residues 586 to 589; sequence RFRS. Residues 598–606 form an external hydrophobic patch (EHP); regulates polymerization into filaments region; sequence VLNLGPITR. Serine 614 carries the GPI-anchor amidated serine lipid modification. A propeptide spans 615 to 641 (removed in mature form); sequence RAAFSSLGLLKVWLPLLLSATLTLTFQ.

In terms of assembly, homodimer that then polymerizes into long filaments. The filaments can additionally assemble laterally to form a sheet. The filaments consist of a zigzag-shaped backbone with laterally protruding arms which interact with bacterial adhesin fimH. Two fimH molecules can bind to a single UMOD monomer. Post-translationally, N-glycosylated. Proteolytically cleaved at a conserved C-terminal proteolytic cleavage site to generate the secreted form found in urine. This cleavage is catalyzed by HPN.

It is found in the apical cell membrane. The protein localises to the basolateral cell membrane. Its subcellular location is the cell projection. It localises to the cilium membrane. The protein resides in the secreted. In terms of biological role, functions in biogenesis and organization of the apical membrane of epithelial cells of the thick ascending limb of Henle's loop (TALH), where it promotes formation of complex filamentous gel-like structure that may play a role in the water barrier permeability. May serve as a receptor for binding and endocytosis of cytokines (IL-1, IL-2) and TNF. Facilitates neutrophil migration across renal epithelia. In the urine, may contribute to colloid osmotic pressure, retards passage of positively charged electrolytes, and inhibits formation of liquid containing supersaturated salts and subsequent formation of salt crystals. Protects against urinary tract infections by binding to type 1 fimbriated E.coli. Binds to bacterial adhesin fimH which mediates the stable formation of bacterial aggregates, prevents the binding of E.coli to uroplakins UPK1A and UPK1B which act as urothelial receptors for type I fimbriae, and allows for pathogen clearance through micturation. Also promotes aggregation of other bacteria including K.pneumoniae, P.aeruginosa and S.mitis and so may also protect against other uropathogens. This Pongo abelii (Sumatran orangutan) protein is Uromodulin (UMOD).